Consider the following 261-residue polypeptide: Cytochrome c oxidase subunit 3 (261 aa).

Over 1-15 (MTHQTHAYHMVNPSP) the chain is Mitochondrial matrix. A helical transmembrane segment spans residues 16 to 34 (WPLTGALSALLMTSGLIMW). The Mitochondrial intermembrane portion of the chain corresponds to 35–40 (FHFNST). A helical membrane pass occupies residues 41–66 (ALLMLGLTTNMLTMYQWWRDIVREST). Topologically, residues 67–72 (FQGHHT) are mitochondrial matrix. A helical transmembrane segment spans residues 73–105 (PTVQKGLRYGMILFIISEVLFFTGFFWAFYHSS). Over 106-128 (LAPTPELGGCWPPTGIHPLNPLE) the chain is Mitochondrial intermembrane. Residues 129 to 152 (VPLLNTSVLLASGVSITWAHHSLM) form a helical membrane-spanning segment. At 153 to 155 (EGN) the chain is on the mitochondrial matrix side. A helical transmembrane segment spans residues 156–183 (RNHMLQALFITIALGVYFTLLQASEYYE). At 184-190 (APFTISD) the chain is on the mitochondrial intermembrane side. A helical membrane pass occupies residues 191 to 223 (GVYGSTFFVATGFHGLHVIIGSTFLIVCFFRQL). Residues 224-232 (KFHFTSNHH) are Mitochondrial matrix-facing. Residues 233 to 256 (FGFEAAAWYWHFVDVVWLFLYVSI) traverse the membrane as a helical segment. Residues 257-261 (YWWGS) lie on the Mitochondrial intermembrane side of the membrane.

This sequence belongs to the cytochrome c oxidase subunit 3 family. As to quaternary structure, component of the cytochrome c oxidase (complex IV, CIV), a multisubunit enzyme composed of 14 subunits. The complex is composed of a catalytic core of 3 subunits MT-CO1, MT-CO2 and MT-CO3, encoded in the mitochondrial DNA, and 11 supernumerary subunits COX4I, COX5A, COX5B, COX6A, COX6B, COX6C, COX7A, COX7B, COX7C, COX8 and NDUFA4, which are encoded in the nuclear genome. The complex exists as a monomer or a dimer and forms supercomplexes (SCs) in the inner mitochondrial membrane with NADH-ubiquinone oxidoreductase (complex I, CI) and ubiquinol-cytochrome c oxidoreductase (cytochrome b-c1 complex, complex III, CIII), resulting in different assemblies (supercomplex SCI(1)III(2)IV(1) and megacomplex MCI(2)III(2)IV(2)).

The protein localises to the mitochondrion inner membrane. The catalysed reaction is 4 Fe(II)-[cytochrome c] + O2 + 8 H(+)(in) = 4 Fe(III)-[cytochrome c] + 2 H2O + 4 H(+)(out). Its function is as follows. Component of the cytochrome c oxidase, the last enzyme in the mitochondrial electron transport chain which drives oxidative phosphorylation. The respiratory chain contains 3 multisubunit complexes succinate dehydrogenase (complex II, CII), ubiquinol-cytochrome c oxidoreductase (cytochrome b-c1 complex, complex III, CIII) and cytochrome c oxidase (complex IV, CIV), that cooperate to transfer electrons derived from NADH and succinate to molecular oxygen, creating an electrochemical gradient over the inner membrane that drives transmembrane transport and the ATP synthase. Cytochrome c oxidase is the component of the respiratory chain that catalyzes the reduction of oxygen to water. Electrons originating from reduced cytochrome c in the intermembrane space (IMS) are transferred via the dinuclear copper A center (CU(A)) of subunit 2 and heme A of subunit 1 to the active site in subunit 1, a binuclear center (BNC) formed by heme A3 and copper B (CU(B)). The BNC reduces molecular oxygen to 2 water molecules using 4 electrons from cytochrome c in the IMS and 4 protons from the mitochondrial matrix. This is Cytochrome c oxidase subunit 3 (MT-CO3) from Cephalophorus natalensis (Natal red duiker).